Here is a 161-residue protein sequence, read N- to C-terminus: Putative 4-hydroxy-4-methyl-2-oxoglutarate aldolase (161 aa).

Substrate is bound by residues 75 to 78 and Arg-97; that span reads GDML. Asp-98 contacts a divalent metal cation.

Belongs to the class II aldolase/RraA-like family. As to quaternary structure, homotrimer. Requires a divalent metal cation as cofactor.

It catalyses the reaction 4-hydroxy-4-methyl-2-oxoglutarate = 2 pyruvate. The catalysed reaction is oxaloacetate + H(+) = pyruvate + CO2. Catalyzes the aldol cleavage of 4-hydroxy-4-methyl-2-oxoglutarate (HMG) into 2 molecules of pyruvate. Also contains a secondary oxaloacetate (OAA) decarboxylase activity due to the common pyruvate enolate transition state formed following C-C bond cleavage in the retro-aldol and decarboxylation reactions. This Marinomonas sp. (strain MWYL1) protein is Putative 4-hydroxy-4-methyl-2-oxoglutarate aldolase.